Reading from the N-terminus, the 292-residue chain is 4-diphosphocytidyl-2-C-methyl-D-erythritol kinase (292 aa).

Lys-13 is an active-site residue. 97–107 lines the ATP pocket; that stretch reads PVAAGLAGGSS. Asp-139 is an active-site residue.

Belongs to the GHMP kinase family. IspE subfamily.

The enzyme catalyses 4-CDP-2-C-methyl-D-erythritol + ATP = 4-CDP-2-C-methyl-D-erythritol 2-phosphate + ADP + H(+). The protein operates within isoprenoid biosynthesis; isopentenyl diphosphate biosynthesis via DXP pathway; isopentenyl diphosphate from 1-deoxy-D-xylulose 5-phosphate: step 3/6. Catalyzes the phosphorylation of the position 2 hydroxy group of 4-diphosphocytidyl-2C-methyl-D-erythritol. The polypeptide is 4-diphosphocytidyl-2-C-methyl-D-erythritol kinase (Bacillus thuringiensis (strain Al Hakam)).